The primary structure comprises 415 residues: Esterase FrsA (415 aa).

The protein belongs to the FrsA family.

The enzyme catalyses a carboxylic ester + H2O = an alcohol + a carboxylate + H(+). Functionally, catalyzes the hydrolysis of esters. This Yersinia enterocolitica serotype O:8 / biotype 1B (strain NCTC 13174 / 8081) protein is Esterase FrsA.